Consider the following 183-residue polypeptide: Large ribosomal subunit protein uL5 (183 aa).

Belongs to the universal ribosomal protein uL5 family. In terms of assembly, part of the 50S ribosomal subunit; part of the 5S rRNA/L5/L18/L25 subcomplex. Contacts the 5S rRNA and the P site tRNA. Forms a bridge to the 30S subunit in the 70S ribosome.

This is one of the proteins that bind and probably mediate the attachment of the 5S RNA into the large ribosomal subunit, where it forms part of the central protuberance. In the 70S ribosome it contacts protein S13 of the 30S subunit (bridge B1b), connecting the 2 subunits; this bridge is implicated in subunit movement. Contacts the P site tRNA; the 5S rRNA and some of its associated proteins might help stabilize positioning of ribosome-bound tRNAs. This chain is Large ribosomal subunit protein uL5, found in Chlorobaculum tepidum (strain ATCC 49652 / DSM 12025 / NBRC 103806 / TLS) (Chlorobium tepidum).